Here is a 66-residue protein sequence, read N- to C-terminus: Surface composition regulator (66 aa).

This sequence belongs to the GlgS family.

Functionally, major determinant of cell surface composition. Negatively regulates motility, adhesion and synthesis of biofilm exopolysaccharides. This is Surface composition regulator from Shigella flexneri.